A 186-amino-acid polypeptide reads, in one-letter code: Akirin-1A (186 aa).

A disordered region spans residues 14–65 (EALMSPQSPKRRRCAPLPGSPATPSPQRCAIRPEMQQGQQQPLSQLGGDRRL). Positions 49-60 (QQGQQQPLSQLG) are enriched in low complexity. The SYVS motif motif lies at 183-186 (SYVS).

It belongs to the akirin family.

Its subcellular location is the nucleus. Functionally, molecular adapter that acts as a bridge between proteins, and which is involved skeletal muscle development. Functions as a signal transducer for MSTN during skeletal muscle regeneration and myogenesis. The chain is Akirin-1A (akirin1-a) from Xenopus laevis (African clawed frog).